The chain runs to 145 residues: MLLVLLFSLFSVGFGMRVMRRELLKDQPTVLLLGPLEVLTSSSSEDDTPDFPSLRDKRGVDPMSIPRLIKEPPLKKRSGDFKRGDVVYPSAAKQTVPLVRVREPPLKRGQMFLEELLQFNDDAHRQFMDPLRRIRYGPNRLIYTW.

A signal peptide spans 1 to 15 (MLLVLLFSLFSVGFG). Positions 41–65 (SSSSEDDTPDFPSLRDKRGVDPMSI) are disordered.

It is found in the secreted. This Caenorhabditis elegans protein is Neuropeptide-like protein 68.